A 415-amino-acid polypeptide reads, in one-letter code: Peptide chain release factor subunit 1 (415 aa).

Belongs to the eukaryotic release factor 1 family. As to quaternary structure, heterodimer of two subunits, one of which binds GTP.

The protein resides in the cytoplasm. In terms of biological role, directs the termination of nascent peptide synthesis (translation) in response to the termination codons UAA, UAG and UGA. This is Peptide chain release factor subunit 1 from Thermococcus kodakarensis (strain ATCC BAA-918 / JCM 12380 / KOD1) (Pyrococcus kodakaraensis (strain KOD1)).